The sequence spans 310 residues: Upstream stimulatory factor 1 (310 aa).

The span at 1–17 (MKGQQKTAETEEGTVQI) shows a compositional bias: polar residues. 2 disordered regions span residues 1–26 (MKGQ…ATGE) and 171–209 (QGGS…EVER). Over residues 194–209 (TTRDEKRRAQHNEVER) the composition is skewed to basic and acidic residues. The region spanning 199–254 (KRRAQHNEVERRRRDKINNWIVQLSKIIPDCSMESTKSGQSKGGILSKACDYIQEL) is the bHLH domain. The leucine-zipper stretch occupies residues 271–292 (LQLDNDVLRQQVEDLKNKNLLL). Residue Lys306 forms a Glycyl lysine isopeptide (Lys-Gly) (interchain with G-Cter in SUMO2) linkage.

In terms of assembly, efficient DNA binding requires dimerization with another bHLH protein. Binds DNA as a homodimer or a heterodimer (USF1/USF2).

The protein localises to the nucleus. Functionally, transcription factor that binds to a symmetrical DNA sequence (E-boxes) (5'-CACGTG-3') that is found in a variety of viral and cellular promoters. Regulates the expression of the surfactant protein-A (SP-A) gene. In Oryctolagus cuniculus (Rabbit), this protein is Upstream stimulatory factor 1 (USF1).